We begin with the raw amino-acid sequence, 440 residues long: tRNA(Ile)-lysidine synthase (440 aa).

29–34 (SGGLDS) contributes to the ATP binding site.

This sequence belongs to the tRNA(Ile)-lysidine synthase family.

Its subcellular location is the cytoplasm. It carries out the reaction cytidine(34) in tRNA(Ile2) + L-lysine + ATP = lysidine(34) in tRNA(Ile2) + AMP + diphosphate + H(+). In terms of biological role, ligates lysine onto the cytidine present at position 34 of the AUA codon-specific tRNA(Ile) that contains the anticodon CAU, in an ATP-dependent manner. Cytidine is converted to lysidine, thus changing the amino acid specificity of the tRNA from methionine to isoleucine. This is tRNA(Ile)-lysidine synthase from Pectobacterium atrosepticum (strain SCRI 1043 / ATCC BAA-672) (Erwinia carotovora subsp. atroseptica).